Consider the following 389-residue polypeptide: Chalcone synthase (389 aa).

The active site involves cysteine 164.

Belongs to the thiolase-like superfamily. Chalcone/stilbene synthases family.

It catalyses the reaction (E)-4-coumaroyl-CoA + 3 malonyl-CoA + 3 H(+) = 2',4,4',6'-tetrahydroxychalcone + 3 CO2 + 4 CoA. Its pathway is secondary metabolite biosynthesis; flavonoid biosynthesis. The primary product of this enzyme is 4,2',4',6'-tetrahydroxychalcone (also termed naringenin-chalcone or chalcone) which can under specific conditions spontaneously isomerize into naringenin. This chain is Chalcone synthase (CHS), found in Pueraria montana var. lobata (Kudzu vine).